Here is a 64-residue protein sequence, read N- to C-terminus: Bacteriocin glycocin F (64 aa).

The signal sequence occupies residues 1–21 (MSKLVKTLTISEISKAQNNGG). Cystine bridges form between C26–C49 and C33–C42. A glycan (O-linked (GlcNAc) serine) is linked at S39. C64 carries S-linked (GlcNAc) cysteine glycosylation.

The protein resides in the secreted. Functionally, has antibacterial activity against L.plantarum ATCC 8014. In purified form, the activity is bacteriostatic (IC(50)=2 nM) rather than bactericidal. The protein is Bacteriocin glycocin F of Lactiplantibacillus plantarum (Lactobacillus plantarum).